A 383-amino-acid polypeptide reads, in one-letter code: Acetylornithine deacetylase (383 aa).

Residue His80 participates in Zn(2+) binding. Residue Asp82 is part of the active site. Asp112 is a Zn(2+) binding site. The active site involves Glu144. The Zn(2+) site is built by Glu145, Glu169, and His355.

The protein belongs to the peptidase M20A family. ArgE subfamily. In terms of assembly, homodimer. It depends on Zn(2+) as a cofactor. Co(2+) serves as cofactor. The cofactor is glutathione.

The protein resides in the cytoplasm. The catalysed reaction is N(2)-acetyl-L-ornithine + H2O = L-ornithine + acetate. It participates in amino-acid biosynthesis; L-arginine biosynthesis; L-ornithine from N(2)-acetyl-L-ornithine (linear): step 1/1. Catalyzes the hydrolysis of the amide bond of N(2)-acetylated L-amino acids. Cleaves the acetyl group from N-acetyl-L-ornithine to form L-ornithine, an intermediate in L-arginine biosynthesis pathway, and a branchpoint in the synthesis of polyamines. The chain is Acetylornithine deacetylase from Salmonella paratyphi A (strain ATCC 9150 / SARB42).